The sequence spans 364 residues: Aminomethyltransferase (364 aa).

The protein belongs to the GcvT family. The glycine cleavage system is composed of four proteins: P, T, L and H.

It carries out the reaction N(6)-[(R)-S(8)-aminomethyldihydrolipoyl]-L-lysyl-[protein] + (6S)-5,6,7,8-tetrahydrofolate = N(6)-[(R)-dihydrolipoyl]-L-lysyl-[protein] + (6R)-5,10-methylene-5,6,7,8-tetrahydrofolate + NH4(+). Its function is as follows. The glycine cleavage system catalyzes the degradation of glycine. In Shigella flexneri serotype 5b (strain 8401), this protein is Aminomethyltransferase.